An 82-amino-acid chain; its full sequence is Diphthamide biosynthesis protein 3 (82 aa).

The region spanning 4–60 (FHDEVEIEDFQYDEDSETYFYPCPCGDNFAITKEDLENGEDVATCPSCSLIIKVIYD) is the DPH-type MB domain. Residues C26, C28, C48, and C51 each coordinate Fe cation.

It belongs to the DPH3 family. In terms of assembly, component of the 2-(3-amino-3-carboxypropyl)histidine synthase complex composed of DPH1, DPH2, DPH3 and a NADH-dependent reductase. Interacts with SERGEF. It depends on Fe(2+) as a cofactor. Widely expressed with highest levels in heart, liver, kidney and testis.

It is found in the cytoplasm. It localises to the nucleus. It catalyses the reaction [3Fe-4S](1+)-[protein] + Fe(2+)-[Dph3] = [3Fe-4S](0)-[protein] + Fe(3+)-[Dph3]. The catalysed reaction is 2 [3Fe-4S](0)-[protein] + 2 Fe(2+)-[Dph3] + NADH = 2 [4Fe-4S](1+)-[protein] + 2 [Dph3] + NAD(+) + H(+). The protein operates within protein modification; peptidyl-diphthamide biosynthesis. Its function is as follows. Required for the first step of diphthamide biosynthesis, a post-translational modification of histidine which occurs in elongation factor 2. DPH1 and DPH2 transfer a 3-amino-3-carboxypropyl (ACP) group from S-adenosyl-L-methionine (SAM) to a histidine residue, the reaction is assisted by a reduction system comprising DPH3 and a NADH-dependent reductase. Acts as an electron donor to reduce the Fe-S cluster in DPH1-DPH2 keeping the [4Fe-4S] clusters in the active and reduced state. Restores iron to DPH1-DPH2 iron-sulfur clusters which have degraded from [4Fe-4S] to [3Fe-4S] by donating an iron atom to reform [4Fe-4S] clusters, in a manner dependent on the presence of elongation factor 2 and SAM. Associates with the elongator complex and is required for tRNA Wobble base modifications mediated by the elongator complex. The elongator complex is required for multiple tRNA modifications, including mcm5U (5-methoxycarbonylmethyl uridine), mcm5s 2U (5-methoxycarbonylmethyl-2-thiouridine), and ncm5U (5-carbamoylmethyl uridine). The polypeptide is Diphthamide biosynthesis protein 3 (Mus musculus (Mouse)).